Here is a 314-residue protein sequence, read N- to C-terminus: Olfactory receptor 5P76 (314 aa).

Residues 1–28 (MAFLEDGNHTAVTGFILLGLTDDPVLRV) are Extracellular-facing. The N-linked (GlcNAc...) asparagine glycan is linked to Asn-8. The helical transmembrane segment at 29-49 (VLFVIILCIYLVTVSGNLSTI) threads the bilayer. Residues 50–57 (LLIRVSSQ) lie on the Cytoplasmic side of the membrane. The chain crosses the membrane as a helical span at residues 58–78 (LHHPMYFFLSHLASADIGYSS). At 79 to 102 (SVTPNMLVNFLVERNTISYLGCGI) the chain is on the extracellular side. An intrachain disulfide couples Cys-100 to Cys-192. A helical membrane pass occupies residues 103–123 (QLGSAVFFGTVECFLLAAMAY). The Cytoplasmic portion of the chain corresponds to 124-136 (DRFIAICSPLLYS). Residues 137–157 (NKMSTQVCVQLLVGSYIGGFL) traverse the membrane as a helical segment. At 158–199 (NASSFTLSFFSLVFCGPNRVNHFFCDFAPLVKLSCSDVSVPA) the chain is on the extracellular side. A helical transmembrane segment spans residues 200–220 (VVPSFTAGSIIIVTIFVIAVS). Residues 221-240 (YIYILITILKMRSTEGRQKA) lie on the Cytoplasmic side of the membrane. A helical membrane pass occupies residues 241-261 (FSTCTSHLTAVTLFYGTITFI). Topologically, residues 262–274 (YVMPKSSYSTDQN) are extracellular. Residues 275–295 (KVVSVFYMVVVPMLNPLIYSL) form a helical membrane-spanning segment. Residues 296–314 (RNKEIKGALKRQLAKNTFS) lie on the Cytoplasmic side of the membrane.

Belongs to the G-protein coupled receptor 1 family.

The protein resides in the cell membrane. Functionally, potential odorant receptor. The chain is Olfactory receptor 5P76 from Mus musculus (Mouse).